A 95-amino-acid polypeptide reads, in one-letter code: Acylphosphatase (95 aa).

In terms of domain architecture, Acylphosphatase-like spans 10 to 95 (CIHVTVSGKV…VEDYSDFRVR (86 aa)). Residues arginine 25 and asparagine 43 contribute to the active site.

It belongs to the acylphosphatase family.

The catalysed reaction is an acyl phosphate + H2O = a carboxylate + phosphate + H(+). This chain is Acylphosphatase (acyP), found in Coxiella burnetii (strain RSA 493 / Nine Mile phase I).